The chain runs to 252 residues: MSLLTEVETYVLSIVPSGPLKAEIAQRLEDVFAGKNTDLEALMEWLKTRPILSPLTKGILGFVFTLTVPSERGLQRRRFVQNALNGNGDPNNMDRAVKLYRKLKREITFHGAKEIALSYSAGALASCMGLIYNRMGAVTTEVAFGLVCATCEQIADSQHRSHRQMVATTNPLIRHENRMVLASTTAKAMEQMAGSSEQAAEAMEIASQARQMVQAMRAIGTHPSSSAGLKDDLLENLQTYQKRMGVQMQRFK.

Residues 1 to 164 (MSLLTEVETY…ADSQHRSHRQ (164 aa)) are membrane-binding. The Nuclear localization signal signature appears at 101–105 (RKLKR). The interval 165–252 (MVATTNPLIR…RMGVQMQRFK (88 aa)) is RNP-binding.

Belongs to the influenza viruses Matrix protein M1 family. In terms of assembly, homodimer and homomultimer. Interacts with NEP. Binds ribonucleocapsid by both interacting with genomic RNA and NP protein. May interact with HA and NA. Cannot bind NP without genomic RNA.

The protein resides in the virion membrane. It is found in the host nucleus. Its function is as follows. Plays critical roles in virus replication, from virus entry and uncoating to assembly and budding of the virus particle. M1 binding to ribonucleocapsids (RNPs) in nucleus seems to inhibit viral transcription. Interaction of viral NEP with M1-RNP is thought to promote nuclear export of the complex, which is targeted to the virion assembly site at the apical plasma membrane in polarized epithelial cells. Interactions with NA and HA may bring M1, a non-raft-associated protein, into lipid rafts. Forms a continuous shell on the inner side of the lipid bilayer in virion, where it binds the RNP. During virus entry into cell, the M2 ion channel acidifies the internal virion core, inducing M1 dissociation from the RNP. M1-free RNPs are transported to the nucleus, where viral transcription and replication can take place. Determines the virion's shape: spherical or filamentous. Clinical isolates of influenza are characterized by the presence of significant proportion of filamentous virions, whereas after multiple passage on eggs or cell culture, virions have only spherical morphology. Filamentous virions are thought to be important to infect neighboring cells, and spherical virions more suited to spread through aerosol between hosts organisms. The polypeptide is Matrix protein 1 (Aves (whales)).